A 112-amino-acid polypeptide reads, in one-letter code: DNA-binding protein Memar_1972 (112 aa).

A disordered region spans residues 14 to 35 (MEQMQRQAMDQQGMEEEAARQQ).

This sequence belongs to the PDCD5 family.

In Methanoculleus marisnigri (strain ATCC 35101 / DSM 1498 / JR1), this protein is DNA-binding protein Memar_1972.